The sequence spans 257 residues: Cytosolic Fe-S cluster assembly factor NUBP2 homolog (257 aa).

14–21 (GKGGVGKS) is an ATP binding site. [4Fe-4S] cluster-binding residues include C188 and C191.

The protein belongs to the Mrp/NBP35 ATP-binding proteins family. NUBP2/CFD1 subfamily. Heterotetramer of 2 NUBP1 and 2 NUBP2 chains. [4Fe-4S] cluster serves as cofactor.

It is found in the cytoplasm. Its function is as follows. Component of the cytosolic iron-sulfur (Fe/S) protein assembly (CIA) machinery. Required for maturation of extramitochondrial Fe-S proteins. The NUBP1-NUBP2 heterotetramer forms a Fe-S scaffold complex, mediating the de novo assembly of an Fe-S cluster and its transfer to target apoproteins. In Culex quinquefasciatus (Southern house mosquito), this protein is Cytosolic Fe-S cluster assembly factor NUBP2 homolog.